The following is a 420-amino-acid chain: L-rhamnose isomerase (420 aa).

3 residues coordinate Mn(2+): His264, Asp296, and Asp298.

It belongs to the rhamnose isomerase family. The cofactor is Mn(2+).

It is found in the cytoplasm. It catalyses the reaction L-rhamnopyranose = L-rhamnulose. It functions in the pathway carbohydrate degradation; L-rhamnose degradation; glycerone phosphate from L-rhamnose: step 1/3. In terms of biological role, catalyzes the interconversion of L-rhamnose and L-rhamnulose. This is L-rhamnose isomerase from Listeria monocytogenes serotype 4b (strain CLIP80459).